The sequence spans 888 residues: Lon protease homolog 2, peroxisomal (888 aa).

The Lon N-terminal domain maps to 11–255 (LAILPFRNKV…KATELVDRHL (245 aa)). 408–415 (GPPGVGKT) is a binding site for ATP. The 186-residue stretch at 692-877 (VASAGVSVGL…EDVLENAFEG (186 aa)) folds into the Lon proteolytic domain. Catalysis depends on residues Ser783 and Lys826. A Microbody targeting signal motif is present at residues 886–888 (SKL).

Belongs to the peptidase S16 family.

Its subcellular location is the peroxisome matrix. The catalysed reaction is Hydrolysis of proteins in presence of ATP.. Its function is as follows. ATP-dependent serine protease that mediates the selective degradation of misfolded and unassembled polypeptides in the peroxisomal matrix. Necessary for type 2 peroxisome targeting signal (PTS2)-containing protein processing and facilitates peroxisome matrix protein import. The polypeptide is Lon protease homolog 2, peroxisomal (LON2) (Arabidopsis thaliana (Mouse-ear cress)).